The following is a 224-amino-acid chain: Ribose-5-phosphate isomerase A (224 aa).

Residues 34–37, 87–90, and 100–103 contribute to the substrate site; these read TGST, DGAD, and KGGG. Glu109 acts as the Proton acceptor in catalysis. Lys127 is a binding site for substrate.

Belongs to the ribose 5-phosphate isomerase family. As to quaternary structure, homodimer.

It carries out the reaction aldehydo-D-ribose 5-phosphate = D-ribulose 5-phosphate. The protein operates within carbohydrate degradation; pentose phosphate pathway; D-ribose 5-phosphate from D-ribulose 5-phosphate (non-oxidative stage): step 1/1. Catalyzes the reversible conversion of ribose-5-phosphate to ribulose 5-phosphate. The chain is Ribose-5-phosphate isomerase A from Francisella tularensis subsp. novicida (strain U112).